The following is a 618-amino-acid chain: Protease 4 (618 aa).

Over 1–24 the chain is Cytoplasmic; sequence MRTLWRFIAGFFKWTWRLLNFVRE. A helical transmembrane segment spans residues 25 to 45; the sequence is MVLNLFFIFLVLVGVGIWMQV. Topologically, residues 46–618 are periplasmic; sequence SGGDSKETAS…AFCLTCANMR (573 aa). Lysine 209 (proton donor/acceptor) is an active-site residue. Serine 409 functions as the Nucleophile in the catalytic mechanism.

This sequence belongs to the peptidase S49 family. As to quaternary structure, homotetramer.

It localises to the cell inner membrane. Inhibited by serine hydrolase inhibitor FP-biotin and by antipain. Its function is as follows. Digests cleaved signal peptides in vitro, its in vivo function is unknown. This activity is necessary to maintain proper secretion of mature proteins across the membrane. In Escherichia coli (strain K12), this protein is Protease 4 (sppA).